Here is a 1489-residue protein sequence, read N- to C-terminus: Chromosome partition protein MukB (1489 aa).

34–41 (GGNGAGKS) lines the ATP pocket. Coiled-coil stretches lie at residues 326–418 (LEAD…QYNQ), 444–472 (LETFQAKEQEATEKLLSLEQKMSVAQTAH), 509–602 (RHLA…QRAP), 780–805 (RAARENRIESLHAEREGLSERFATLS), 835–919 (EAEI…GNQL), 977–1116 (EMLS…AKAG), and 1209–1266 (VEAI…QNVS). The interval 666–783 (PGGSEDSRLN…TVPIFGRAAR (118 aa)) is flexible hinge.

It belongs to the SMC family. MukB subfamily. Homodimerization via its hinge domain. Binds to DNA via its C-terminal region. Interacts, and probably forms a ternary complex, with MukE and MukF via its C-terminal region. The complex formation is stimulated by calcium or magnesium. Interacts with tubulin-related protein FtsZ.

It is found in the cytoplasm. The protein resides in the nucleoid. In terms of biological role, plays a central role in chromosome condensation, segregation and cell cycle progression. Functions as a homodimer, which is essential for chromosome partition. Involved in negative DNA supercoiling in vivo, and by this means organize and compact chromosomes. May achieve or facilitate chromosome segregation by condensation DNA from both sides of a centrally located replisome during cell division. This Citrobacter koseri (strain ATCC BAA-895 / CDC 4225-83 / SGSC4696) protein is Chromosome partition protein MukB.